The chain runs to 273 residues: Dermonecrotic toxin LapSicTox-alphaIB1ai (273 aa).

His5 is a catalytic residue. Mg(2+) contacts are provided by Glu25 and Asp27. His41 functions as the Nucleophile in the catalytic mechanism. Disulfide bonds link Cys45/Cys51 and Cys47/Cys190. Residue Asp85 coordinates Mg(2+). The N-linked (GlcNAc...) asparagine glycan is linked to Asn250.

This sequence belongs to the arthropod phospholipase D family. Class II subfamily. Requires Mg(2+) as cofactor. Expressed by the venom gland.

It localises to the secreted. It catalyses the reaction an N-(acyl)-sphingosylphosphocholine = an N-(acyl)-sphingosyl-1,3-cyclic phosphate + choline. The enzyme catalyses an N-(acyl)-sphingosylphosphoethanolamine = an N-(acyl)-sphingosyl-1,3-cyclic phosphate + ethanolamine. It carries out the reaction a 1-acyl-sn-glycero-3-phosphocholine = a 1-acyl-sn-glycero-2,3-cyclic phosphate + choline. The catalysed reaction is a 1-acyl-sn-glycero-3-phosphoethanolamine = a 1-acyl-sn-glycero-2,3-cyclic phosphate + ethanolamine. Functionally, dermonecrotic toxins cleave the phosphodiester linkage between the phosphate and headgroup of certain phospholipids (sphingolipid and lysolipid substrates), forming an alcohol (often choline) and a cyclic phosphate. This toxin acts on sphingomyelin (SM). It may also act on ceramide phosphoethanolamine (CPE), lysophosphatidylcholine (LPC) and lysophosphatidylethanolamine (LPE), but not on lysophosphatidylserine (LPS), and lysophosphatidylglycerol (LPG). It acts by transphosphatidylation, releasing exclusively cyclic phosphate products as second products. Induces dermonecrosis, hemolysis, increased vascular permeability, edema, inflammatory response, and platelet aggregation. The sequence is that of Dermonecrotic toxin LapSicTox-alphaIB1ai from Loxosceles apachea (Apache recluse spider).